We begin with the raw amino-acid sequence, 99 residues long: SAGA-associated factor 11 (99 aa).

The segment at Ile-71 to Cys-92 adopts an SGF11-type zinc-finger fold.

Belongs to the SGF11 family. In terms of assembly, component of the 1.8 MDa SAGA transcription coactivator-HAT complex. SAGA is built of 5 distinct domains with specialized functions. Within the SAGA complex, SUS1, SGF11, SGF73 and UBP8 form an additional subcomplex of SAGA called the DUB module (deubiquitination module). Interacts directly with SGF73, SUS1 and UBP8.

Its subcellular location is the nucleus. Its function is as follows. Functions as a component of the transcription regulatory histone acetylation (HAT) complex SAGA. At the promoters, SAGA is required for recruitment of the basal transcription machinery. It influences RNA polymerase II transcriptional activity through different activities such as TBP interaction and promoter selectivity, interaction with transcription activators, and chromatin modification through histone acetylation and deubiquitination. SAGA acetylates nucleosomal histone H3 to some extent (to form H3K9ac, H3K14ac, H3K18ac and H3K23ac). SAGA interacts with DNA via upstream activating sequences (UASs). Involved in transcriptional regulation of a subset of SAGA-regulated genes. Within the SAGA complex, participates in a subcomplex, that specifically deubiquitinates histones H2B. This is SAGA-associated factor 11 from Saccharomyces cerevisiae (strain YJM789) (Baker's yeast).